We begin with the raw amino-acid sequence, 344 residues long: UDP-glucose 4-epimerase (344 aa).

Residues 15-17 (GYI), 36-40 (DNLSN), 63-64 (DI), phenylalanine 85, and lysine 89 each bind NAD(+). Residue 129-131 (SAT) coordinates substrate. Catalysis depends on tyrosine 153, which acts as the Proton acceptor. Residues lysine 157 and tyrosine 181 each contribute to the NAD(+) site. Residues 181–183 (YFN), 202–204 (NNL), 220–222 (SIF), arginine 235, and 297–300 (RKGD) each bind substrate.

The protein belongs to the NAD(P)-dependent epimerase/dehydratase family. As to quaternary structure, homodimer. NAD(+) is required as a cofactor.

It catalyses the reaction UDP-alpha-D-glucose = UDP-alpha-D-galactose. The enzyme catalyses UDP-N-acetyl-alpha-D-glucosamine = UDP-N-acetyl-alpha-D-galactosamine. Its pathway is carbohydrate metabolism; galactose metabolism. Catalyzes two distinct but analogous reactions: the reversible epimerization of UDP-glucose to UDP-galactose and the reversible epimerization of UDP-N-acetylglucosamine to UDP-N-acetylgalactosamine. The reaction with UDP-Gal plays a critical role in the Leloir pathway of galactose catabolism in which galactose is converted to the glycolytic intermediate glucose 6-phosphate. It contributes to the catabolism of dietary galactose and enables the endogenous biosynthesis of both UDP-Gal and UDP-GalNAc when exogenous sources are limited. Both UDP-sugar interconversions are important in the synthesis of glycoproteins and glycolipids. This Dictyostelium discoideum (Social amoeba) protein is UDP-glucose 4-epimerase (galE).